The chain runs to 416 residues: Probable mannose-6-phosphate isomerase (416 aa).

Zn(2+) is bound by residues Gln99, His101, Glu126, and His259. Residue Arg278 is part of the active site.

This sequence belongs to the mannose-6-phosphate isomerase type 1 family. Zn(2+) is required as a cofactor.

Its subcellular location is the cytoplasm. It carries out the reaction D-mannose 6-phosphate = D-fructose 6-phosphate. It functions in the pathway nucleotide-sugar biosynthesis; GDP-alpha-D-mannose biosynthesis; alpha-D-mannose 1-phosphate from D-fructose 6-phosphate: step 1/2. Involved in the synthesis of the GDP-mannose and dolichol-phosphate-mannose required for a number of critical mannosyl transfer reactions. The polypeptide is Probable mannose-6-phosphate isomerase (Caenorhabditis elegans).